A 179-amino-acid chain; its full sequence is Large ribosomal subunit protein uL5 (179 aa).

It belongs to the universal ribosomal protein uL5 family. As to quaternary structure, part of the 50S ribosomal subunit; part of the 5S rRNA/L5/L18/L25 subcomplex. Contacts the 5S rRNA and the P site tRNA. Forms a bridge to the 30S subunit in the 70S ribosome.

In terms of biological role, this is one of the proteins that bind and probably mediate the attachment of the 5S RNA into the large ribosomal subunit, where it forms part of the central protuberance. In the 70S ribosome it contacts protein S13 of the 30S subunit (bridge B1b), connecting the 2 subunits; this bridge is implicated in subunit movement. Contacts the P site tRNA; the 5S rRNA and some of its associated proteins might help stabilize positioning of ribosome-bound tRNAs. In Mannheimia succiniciproducens (strain KCTC 0769BP / MBEL55E), this protein is Large ribosomal subunit protein uL5.